The chain runs to 107 residues: MADISFSLHAEQTLESLLERMSEFDALADLDMDIIDGVLTLEFDDGGKLILNRQEAASQIWLASPEGPAHFGYDADRDAWLNDRTGESLTDTLNRVLSAGCGETIRL.

The protein belongs to the frataxin family.

Its function is as follows. Involved in iron-sulfur (Fe-S) cluster assembly. May act as a regulator of Fe-S biogenesis. This is Iron-sulfur cluster assembly protein CyaY from Thioalkalivibrio sulfidiphilus (strain HL-EbGR7).